The following is an 87-amino-acid chain: Acylphosphatase (87 aa).

Positions 1 to 87 (MAWVHGRVQG…EDYQDFRIRY (87 aa)) constitute an Acylphosphatase-like domain. Residues arginine 14 and asparagine 32 contribute to the active site.

It belongs to the acylphosphatase family.

It catalyses the reaction an acyl phosphate + H2O = a carboxylate + phosphate + H(+). This chain is Acylphosphatase (acyP), found in Cronobacter sakazakii (strain ATCC BAA-894) (Enterobacter sakazakii).